A 198-amino-acid polypeptide reads, in one-letter code: Nucleoid occlusion factor SlmA (198 aa).

Positions R9–L70 constitute an HTH tetR-type domain. The H-T-H motif DNA-binding region spans T33 to F52. Positions D119–K144 form a coiled coil.

The protein belongs to the nucleoid occlusion factor SlmA family. In terms of assembly, homodimer. Interacts with FtsZ.

The protein resides in the cytoplasm. It localises to the nucleoid. Its function is as follows. Required for nucleoid occlusion (NO) phenomenon, which prevents Z-ring formation and cell division over the nucleoid. Acts as a DNA-associated cell division inhibitor that binds simultaneously chromosomal DNA and FtsZ, and disrupts the assembly of FtsZ polymers. SlmA-DNA-binding sequences (SBS) are dispersed on non-Ter regions of the chromosome, preventing FtsZ polymerization at these regions. This is Nucleoid occlusion factor SlmA from Yersinia enterocolitica serotype O:8 / biotype 1B (strain NCTC 13174 / 8081).